We begin with the raw amino-acid sequence, 143 residues long: Nucleoside diphosphate kinase (143 aa).

ATP contacts are provided by K11, F59, R87, T93, R104, and N114. H117 (pros-phosphohistidine intermediate) is an active-site residue.

The protein belongs to the NDK family. In terms of assembly, homotetramer. It depends on Mg(2+) as a cofactor.

It is found in the cytoplasm. The enzyme catalyses dZDP + ATP = dZTP + ADP. It carries out the reaction a 2'-deoxyribonucleoside 5'-diphosphate + ATP = a 2'-deoxyribonucleoside 5'-triphosphate + ADP. The catalysed reaction is a ribonucleoside 5'-diphosphate + ATP = a ribonucleoside 5'-triphosphate + ADP. Its pathway is purine metabolism. Its function is as follows. Major role in the synthesis of nucleoside triphosphates other than ATP. The ATP gamma phosphate is transferred to the NDP beta phosphate via a ping-pong mechanism, using a phosphorylated active-site intermediate. (Microbial infection) Catalyzes the phosphorylation of dZDP to dZTP, when the bacterium is infected by a phage that produces the substrate for the synthesis of dZTP (2- amino-2'-deoxyadenosine 5'-triphosphate), which is then used by the phage as a DNA polymerase substrate. This chain is Nucleoside diphosphate kinase, found in Salmonella paratyphi C (strain RKS4594).